We begin with the raw amino-acid sequence, 315 residues long: MSESLRIIFAGTPDFAARHLDALLSSGHNVVGVFTQPDRPAGRGKKLMPSPVKVLAEEKGLPVFQPVSLRPQENQQLVADLQADVMVVVAYGLILPKAVLEMPRLGCINVHGSLLPRWRGAAPIQRSLWAGDAETGVTIMQMDVGLDTGDMLYKLSCPITAEDTSGTLYDKLAELGPQGLITTLKQLADGTAKPEVQDETLVTYAEKLSKEEARIDWSLSAAQLERCIRAFNPWPMSWLEIEGQPVKVWKASVIDTATNAAPGTILEANKQGIQVATGDGILNLLSLQPAGKKAMSAQDLLNSRREWFVPGNRLV.

113–116 (SLLP) is a binding site for (6S)-5,6,7,8-tetrahydrofolate.

The protein belongs to the Fmt family.

The catalysed reaction is L-methionyl-tRNA(fMet) + (6R)-10-formyltetrahydrofolate = N-formyl-L-methionyl-tRNA(fMet) + (6S)-5,6,7,8-tetrahydrofolate + H(+). Functionally, attaches a formyl group to the free amino group of methionyl-tRNA(fMet). The formyl group appears to play a dual role in the initiator identity of N-formylmethionyl-tRNA by promoting its recognition by IF2 and preventing the misappropriation of this tRNA by the elongation apparatus. The polypeptide is Methionyl-tRNA formyltransferase (Escherichia coli O127:H6 (strain E2348/69 / EPEC)).